A 581-amino-acid chain; its full sequence is Threonine--tRNA ligase (581 aa).

The interval 185–478 (DHRKLGKELD…LIEHYGGAFP (294 aa)) is catalytic. Zn(2+) contacts are provided by cysteine 278, histidine 329, and histidine 455.

The protein belongs to the class-II aminoacyl-tRNA synthetase family. In terms of assembly, homodimer. Zn(2+) is required as a cofactor.

It localises to the cytoplasm. The enzyme catalyses tRNA(Thr) + L-threonine + ATP = L-threonyl-tRNA(Thr) + AMP + diphosphate + H(+). In terms of biological role, catalyzes the attachment of threonine to tRNA(Thr) in a two-step reaction: L-threonine is first activated by ATP to form Thr-AMP and then transferred to the acceptor end of tRNA(Thr). Also edits incorrectly charged L-seryl-tRNA(Thr). This Borreliella afzelii (strain PKo) (Borrelia afzelii) protein is Threonine--tRNA ligase.